A 183-amino-acid polypeptide reads, in one-letter code: Inosine triphosphate pyrophosphatase (183 aa).

T8 to K13 is an ITP binding site. E36 serves as a coordination point for Mg(2+). ITP contacts are provided by residues K48, D64–T65, K81, F140–D143, K161, and H166–R167.

This sequence belongs to the HAM1 NTPase family. Homodimer. Mg(2+) serves as cofactor. It depends on Mn(2+) as a cofactor.

Its subcellular location is the cytoplasm. The protein localises to the nucleus. The enzyme catalyses ITP + H2O = IMP + diphosphate + H(+). It carries out the reaction dITP + H2O = dIMP + diphosphate + H(+). It catalyses the reaction XTP + H2O = XMP + diphosphate + H(+). In terms of biological role, pyrophosphatase that hydrolyzes non-canonical purine nucleotides such as inosine triphosphate (ITP), deoxyinosine triphosphate (dITP) or xanthosine 5'-triphosphate (XTP) to their respective monophosphate derivatives. The enzyme does not distinguish between the deoxy- and ribose forms. Probably excludes non-canonical purines from RNA and DNA precursor pools, thus preventing their incorporation into RNA and DNA and avoiding chromosomal lesions. In Ajellomyces capsulatus (strain G186AR / H82 / ATCC MYA-2454 / RMSCC 2432) (Darling's disease fungus), this protein is Inosine triphosphate pyrophosphatase.